Reading from the N-terminus, the 225-residue chain is PKHD-type hydroxylase YbiX (225 aa).

Residues 78 to 177 enclose the Fe2OG dioxygenase domain; sequence TLSTPLFNRY…RVASFMWIQS (100 aa). His96, Asp98, and His158 together coordinate Fe cation. Arg168 is a binding site for 2-oxoglutarate.

Fe(2+) serves as cofactor. It depends on L-ascorbate as a cofactor.

The polypeptide is PKHD-type hydroxylase YbiX (Shigella boydii serotype 4 (strain Sb227)).